A 1033-amino-acid chain; its full sequence is Isoleucine--tRNA ligase 2 (1033 aa).

Positions 47–57 match the 'HIGH' region motif; it reads PTANGLPHVGH. The 'KMSKS' region signature appears at 590–594; the sequence is KMSKS. Lys-593 is an ATP binding site.

The protein belongs to the class-I aminoacyl-tRNA synthetase family. IleS type 2 subfamily. As to quaternary structure, monomer. Requires Zn(2+) as cofactor.

The protein localises to the cytoplasm. It carries out the reaction tRNA(Ile) + L-isoleucine + ATP = L-isoleucyl-tRNA(Ile) + AMP + diphosphate. Catalyzes the attachment of isoleucine to tRNA(Ile). As IleRS can inadvertently accommodate and process structurally similar amino acids such as valine, to avoid such errors it has two additional distinct tRNA(Ile)-dependent editing activities. One activity is designated as 'pretransfer' editing and involves the hydrolysis of activated Val-AMP. The other activity is designated 'posttransfer' editing and involves deacylation of mischarged Val-tRNA(Ile). The chain is Isoleucine--tRNA ligase 2 from Bacillus cereus (strain ATCC 14579 / DSM 31 / CCUG 7414 / JCM 2152 / NBRC 15305 / NCIMB 9373 / NCTC 2599 / NRRL B-3711).